Reading from the N-terminus, the 380-residue chain is Chromo domain-containing protein 2 (380 aa).

2 disordered regions span residues 14–58 (ISES…SLYG) and 100–156 (KLSP…VPLN). Residues 33–52 (NSINNKSSTASLESPQNGSW) show a composition bias toward polar residues. Residues 108–119 (EDSEDKKEEDES) show a composition bias toward acidic residues. The span at 121 to 140 (SYKNEFKSSSSASVSSNFEK) shows a compositional bias: low complexity. A Chromo domain is found at 176 to 238 (FAVEMILDSR…SRGGKPDLSS (63 aa)). Residues 250 to 273 (SNEASYVEKDESSNSDDSISYKRR) are disordered.

The protein localises to the nucleus. Component of the kinetochore which plays a role in stabilizing microtubules and so allowing accurate chromosome segregation. The protein is Chromo domain-containing protein 2 (chp2) of Schizosaccharomyces pombe (strain 972 / ATCC 24843) (Fission yeast).